Reading from the N-terminus, the 806-residue chain is Leucine--tRNA ligase (806 aa).

The 'HIGH' region signature appears at 40–51 (PYPSGQGLHVGH). The 'KMSKS' region signature appears at 578-582 (KMSKS). Residue K581 participates in ATP binding.

Belongs to the class-I aminoacyl-tRNA synthetase family.

The protein localises to the cytoplasm. It carries out the reaction tRNA(Leu) + L-leucine + ATP = L-leucyl-tRNA(Leu) + AMP + diphosphate. This is Leucine--tRNA ligase from Limosilactobacillus reuteri (strain DSM 20016) (Lactobacillus reuteri).